The sequence spans 445 residues: Glycine--tRNA ligase (445 aa).

Substrate contacts are provided by Arg97 and Glu145. Residues 177-179 (RNE), 187-192 (FRTCEF), 262-263 (EV), and 308-311 (GLTR) each bind ATP. 192 to 196 (FEQME) lines the substrate pocket. 304–308 (ETSAG) provides a ligand contact to substrate.

This sequence belongs to the class-II aminoacyl-tRNA synthetase family. In terms of assembly, homodimer.

The protein resides in the cytoplasm. It carries out the reaction tRNA(Gly) + glycine + ATP = glycyl-tRNA(Gly) + AMP + diphosphate. In terms of biological role, catalyzes the attachment of glycine to tRNA(Gly). The protein is Glycine--tRNA ligase of Borreliella burgdorferi (strain ATCC 35210 / DSM 4680 / CIP 102532 / B31) (Borrelia burgdorferi).